The primary structure comprises 529 residues: Peptide chain release factor 3 (529 aa).

The region spanning 11–280 (KKRRTFAIIS…GLVEWAPAPL (270 aa)) is the tr-type G domain. GTP is bound by residues 20–27 (SHPDAGKT), 88–92 (DTPGH), and 142–145 (NKLD).

The protein belongs to the TRAFAC class translation factor GTPase superfamily. Classic translation factor GTPase family. PrfC subfamily.

It localises to the cytoplasm. Its function is as follows. Increases the formation of ribosomal termination complexes and stimulates activities of RF-1 and RF-2. It binds guanine nucleotides and has strong preference for UGA stop codons. It may interact directly with the ribosome. The stimulation of RF-1 and RF-2 is significantly reduced by GTP and GDP, but not by GMP. This chain is Peptide chain release factor 3, found in Alteromonas mediterranea (strain DSM 17117 / CIP 110805 / LMG 28347 / Deep ecotype).